The sequence spans 944 residues: MKGPSIVVKGARAHNLKGVDIELPKNKLIVMTGLSGSGKSSLAFDTIYAEGQRRYVESLSAYARQFLGQMDKPDVDTIEGLSPAISIDQKTTSKNPRSTVATVTEIYDYIRLLYARVGKPYCPYHGIEIESQTVQQMVDRILELEERTKIQLLAPVISHRKGSHEKLIEDIGKKGYVRLRVDDEIVDVNEVPQLDKNKNHTIEVVVDRLVVKDGIETRLADSIETALELAEGNLTVDVINGEELKFSENHACPICGFSIGELEPRMFSFNSPFGACPTCDGLGQKLKVDLDLVIPDKNKTLNEGAIEPWEPTSSDFYPTLLKRVCEVYKINMDKPYKKLTDRQKNILMNGSGEKEIEFTFTQRNGGTRKRKMVFEGVVPNIDRRYHESPSEYTREMMSKYMTELPCETCHGKRLSKEALSVYVGDYNIGEVVEYSIKNALYYFENLKLSDQDKSIADQILKEIISRLSFLNNVGLEYLTLDRSSGTLSGGEAQRIRLATQIGSRLTGVLYVLDEPSIGLHQRDNDRLINTLKEMRDLGNTLIVVEHDDDTMRAADYLVDVGPGAGNHGGEVVSSGTPNKVMKDKKSLTGQYLSGKKRIEVPEYRREITDRKIQIKGAKSNNLKNVNVDFPLSVLTVVTGVSGSGKSSLVNEILYKALAQKINKSKVKPGNFDEIKGIDQLDKIIDIDQSPIGRTPRSNPATYTGVFDDIRDVFAQTNEAKIRGYQKGRFSFNVKGGRCEACKGDGIIKIEMHFLPDVYVPCEVCDGKRYNRETLEVTYKGKNIADVLEMTVEEATHFFENIPKIKRKLQTLVDVGLGYITLGQQGTTLSGGEAQRVKLASELHKRSTGRSIYILDEPTTGLHVDDISRLLKVLNRIVENGDTVVIIEHNLDVIKTADHIIDLGPEGGEGGGTIIATGTPEEIAQNKGSYTGQYLKPVLERDSVE.

33–40 (GLSGSGKS) is a binding site for ATP. A C4-type zinc finger spans residues 252-279 (CPICGFSIGELEPRMFSFNSPFGACPTC). ABC transporter domains follow at residues 309–587 (WEPT…KKSL) and 607–935 (ITDR…QYLK). 639 to 646 (GVSGSGKS) contacts ATP. The C4-type zinc finger occupies 738-764 (CEACKGDGIIKIEMHFLPDVYVPCEVC).

Belongs to the ABC transporter superfamily. UvrA family. In terms of assembly, forms a heterotetramer with UvrB during the search for lesions.

The protein localises to the cytoplasm. Its function is as follows. The UvrABC repair system catalyzes the recognition and processing of DNA lesions. UvrA is an ATPase and a DNA-binding protein. A damage recognition complex composed of 2 UvrA and 2 UvrB subunits scans DNA for abnormalities. When the presence of a lesion has been verified by UvrB, the UvrA molecules dissociate. This chain is UvrABC system protein A, found in Staphylococcus epidermidis (strain ATCC 12228 / FDA PCI 1200).